Reading from the N-terminus, the 135-residue chain is Nucleoside diphosphate kinase (135 aa).

Residues Lys-9, Tyr-57, Arg-85, Thr-91, Arg-102, and Asn-112 each contribute to the ATP site. The active-site Pros-phosphohistidine intermediate is the His-115.

Belongs to the NDK family. As to quaternary structure, homotetramer. Requires Mg(2+) as cofactor.

The protein resides in the cytoplasm. It catalyses the reaction a 2'-deoxyribonucleoside 5'-diphosphate + ATP = a 2'-deoxyribonucleoside 5'-triphosphate + ADP. The enzyme catalyses a ribonucleoside 5'-diphosphate + ATP = a ribonucleoside 5'-triphosphate + ADP. Its function is as follows. Major role in the synthesis of nucleoside triphosphates other than ATP. The ATP gamma phosphate is transferred to the NDP beta phosphate via a ping-pong mechanism, using a phosphorylated active-site intermediate. This is Nucleoside diphosphate kinase from Thermoanaerobacter pseudethanolicus (strain ATCC 33223 / 39E) (Clostridium thermohydrosulfuricum).